We begin with the raw amino-acid sequence, 1316 residues long: DNA-directed RNA polymerase subunit beta' (1316 aa).

Zn(2+) contacts are provided by cysteine 60, cysteine 62, cysteine 75, and cysteine 78. Residues aspartate 535, aspartate 537, and aspartate 539 each coordinate Mg(2+). Zn(2+) contacts are provided by cysteine 891, cysteine 968, cysteine 975, and cysteine 978.

It belongs to the RNA polymerase beta' chain family. As to quaternary structure, the RNAP catalytic core consists of 2 alpha, 1 beta, 1 beta' and 1 omega subunit. When a sigma factor is associated with the core the holoenzyme is formed, which can initiate transcription. Mg(2+) serves as cofactor. It depends on Zn(2+) as a cofactor.

It catalyses the reaction RNA(n) + a ribonucleoside 5'-triphosphate = RNA(n+1) + diphosphate. Its function is as follows. DNA-dependent RNA polymerase catalyzes the transcription of DNA into RNA using the four ribonucleoside triphosphates as substrates. The polypeptide is DNA-directed RNA polymerase subunit beta' (Mycobacterium tuberculosis (strain CDC 1551 / Oshkosh)).